A 160-amino-acid chain; its full sequence is 6,7-dimethyl-8-ribityllumazine synthase (160 aa).

Residues Trp-27, 59 to 61, and 81 to 83 each bind 5-amino-6-(D-ribitylamino)uracil; these read AIE and VVI. Position 86 to 87 (86 to 87) interacts with (2S)-2-hydroxy-3-oxobutyl phosphate; the sequence is DT. Catalysis depends on His-89, which acts as the Proton donor. Residue Asn-114 participates in 5-amino-6-(D-ribitylamino)uracil binding. Arg-128 contributes to the (2S)-2-hydroxy-3-oxobutyl phosphate binding site.

The protein belongs to the DMRL synthase family. Homopentamer.

It catalyses the reaction (2S)-2-hydroxy-3-oxobutyl phosphate + 5-amino-6-(D-ribitylamino)uracil = 6,7-dimethyl-8-(1-D-ribityl)lumazine + phosphate + 2 H2O + H(+). Its pathway is cofactor biosynthesis; riboflavin biosynthesis; riboflavin from 2-hydroxy-3-oxobutyl phosphate and 5-amino-6-(D-ribitylamino)uracil: step 1/2. In terms of biological role, catalyzes the formation of 6,7-dimethyl-8-ribityllumazine by condensation of 5-amino-6-(D-ribitylamino)uracil with 3,4-dihydroxy-2-butanone 4-phosphate. This is the penultimate step in the biosynthesis of riboflavin. This is 6,7-dimethyl-8-ribityllumazine synthase from Mycobacterium leprae (strain Br4923).